Reading from the N-terminus, the 537-residue chain is Arginine--tRNA ligase (537 aa).

The 'HIGH' region signature appears at A113–H123.

This sequence belongs to the class-I aminoacyl-tRNA synthetase family. In terms of assembly, monomer.

The protein localises to the cytoplasm. It catalyses the reaction tRNA(Arg) + L-arginine + ATP = L-arginyl-tRNA(Arg) + AMP + diphosphate. This is Arginine--tRNA ligase (argS) from Mycoplasma pneumoniae (strain ATCC 29342 / M129 / Subtype 1) (Mycoplasmoides pneumoniae).